A 189-amino-acid chain; its full sequence is Calcyphosin (189 aa).

4 EF-hand domains span residues 21–56, 57–92, 93–128, and 136–172; these read SGIQ…LGLV, LDTA…PMSQ, AREA…RTHP, and TEEQ…VSAS. 14 residues coordinate Ca(2+): Asp34, Asp36, Ser38, Ser40, Glu45, Asp70, Asp72, Ser74, Thr76, Glu81, Asp106, Ser108, Asp110, and Asp117. Residue Ser40 is modified to Phosphoserine; by PKA.

In terms of assembly, monomer. Does not form oligomers in the presence of calcium.

Its subcellular location is the cytoplasm. Functionally, calcium-binding protein. May play a role in cellular signaling events (Potential). The chain is Calcyphosin (CAPS) from Bos taurus (Bovine).